A 92-amino-acid polypeptide reads, in one-letter code: Small ribosomal subunit protein uS19 (92 aa).

Belongs to the universal ribosomal protein uS19 family.

Its function is as follows. Protein S19 forms a complex with S13 that binds strongly to the 16S ribosomal RNA. The protein is Small ribosomal subunit protein uS19 of Bacillus mycoides (strain KBAB4) (Bacillus weihenstephanensis).